Reading from the N-terminus, the 1147-residue chain is Putative ATP-dependent RNA helicase L377 (1147 aa).

The region spanning 108 to 315 (INPNTPYRGL…VELINYLRPK (208 aa)) is the Helicase ATP-binding domain. 121–128 (WGTGVGKS) lines the ATP pocket. A DEAH box motif is present at residues 264-267 (DEAH).

The protein belongs to the DEAD box helicase family. DEAH subfamily.

It localises to the virion. It catalyses the reaction ATP + H2O = ADP + phosphate + H(+). The sequence is that of Putative ATP-dependent RNA helicase L377 from Acanthamoeba polyphaga (Amoeba).